A 215-amino-acid chain; its full sequence is MKYQLTVMEARVIGCLLEKQVTTPEQYPLSVNGVVTACNQKTNREPVMNLSESEVQEQLDNLVKRHYLRTVSGFGNRVTKYEQRFCNSEFGDLKLSAAEVALITTLLLRGAQTPGELRSRAARMYEFSDMAEVESTLEQLANREDGPFVVRLAREPGKRESRYMHLFSGEVENPPAVTDMSNAADGDLQARVEALEIEVAELKQRLDSLLAHLGD.

At K80 the chain carries N6-acetyllysine.

This sequence belongs to the UPF0502 family.

The chain is UPF0502 protein YceH from Escherichia coli O81 (strain ED1a).